The following is a 141-amino-acid chain: Nucleoside diphosphate kinase (141 aa).

Residues K11, F59, R87, T93, R104, and N114 each contribute to the ATP site. The active-site Pros-phosphohistidine intermediate is H117.

It belongs to the NDK family. Homotetramer. It depends on Mg(2+) as a cofactor.

The protein localises to the cytoplasm. The enzyme catalyses a 2'-deoxyribonucleoside 5'-diphosphate + ATP = a 2'-deoxyribonucleoside 5'-triphosphate + ADP. The catalysed reaction is a ribonucleoside 5'-diphosphate + ATP = a ribonucleoside 5'-triphosphate + ADP. Major role in the synthesis of nucleoside triphosphates other than ATP. The ATP gamma phosphate is transferred to the NDP beta phosphate via a ping-pong mechanism, using a phosphorylated active-site intermediate. This Janthinobacterium sp. (strain Marseille) (Minibacterium massiliensis) protein is Nucleoside diphosphate kinase.